The chain runs to 99 residues: RNA-binding protein Hfq (99 aa).

Residues 10-71 (DLFLNQLRKE…ISSILPSKPI (62 aa)) form the Sm domain. The interval 77–99 (VQNSQVQNTASQQSNNNQNQESK) is disordered.

It belongs to the Hfq family. Homohexamer.

In terms of biological role, RNA chaperone that binds small regulatory RNA (sRNAs) and mRNAs to facilitate mRNA translational regulation in response to envelope stress, environmental stress and changes in metabolite concentrations. Also binds with high specificity to tRNAs. This is RNA-binding protein Hfq from Caldicellulosiruptor saccharolyticus (strain ATCC 43494 / DSM 8903 / Tp8T 6331).